We begin with the raw amino-acid sequence, 189 residues long: Elongation factor P (189 aa).

An N6-(3,6-diaminohexanoyl)-5-hydroxylysine modification is found at K34.

It belongs to the elongation factor P family. May be beta-lysylated on the epsilon-amino group of Lys-34 by the combined action of EpmA and EpmB, and then hydroxylated on the C5 position of the same residue by EpmC (if this protein is present). Lysylation is critical for the stimulatory effect of EF-P on peptide-bond formation. The lysylation moiety may extend toward the peptidyltransferase center and stabilize the terminal 3-CCA end of the tRNA. Hydroxylation of the C5 position on Lys-34 may allow additional potential stabilizing hydrogen-bond interactions with the P-tRNA.

The protein resides in the cytoplasm. It functions in the pathway protein biosynthesis; polypeptide chain elongation. Its function is as follows. Involved in peptide bond synthesis. Alleviates ribosome stalling that occurs when 3 or more consecutive Pro residues or the sequence PPG is present in a protein, possibly by augmenting the peptidyl transferase activity of the ribosome. Modification of Lys-34 is required for alleviation. The chain is Elongation factor P from Legionella pneumophila (strain Paris).